The chain runs to 620 residues: uncharacterized protein (620 aa).

Belongs to the chlamydial CPn_0512/CT_425/TC_0708 family.

This is an uncharacterized protein from Chlamydia pneumoniae (Chlamydophila pneumoniae).